A 372-amino-acid polypeptide reads, in one-letter code: Invasion protein InvE (372 aa).

Residues 1–19 (MIPGSTSGISFSRILSRQT) show a composition bias toward polar residues. Residues 1-46 (MIPGSTSGISFSRILSRQTSHQDATQHTDAQQAEIQQAAEDSSPGA) are disordered. Residues 21 to 40 (HQDATQHTDAQQAEIQQAAE) show a composition bias toward low complexity.

It localises to the cell membrane. Functionally, involved in the triggering of intracellular events that lead to microbial internalization. These events include increase in calcium level, redistribution of actin microfilaments, and changes in the normal structure of the microvilli. Encoded within the type III secretion system (SPI-1 T3SS), it is essential for the translocation of protein effectors into host cells. Forms a complex with SipB and SipC in the presence of their chaperone SicA. Positively regulates the secretion of SPI-1 T3SS effector proteins SipB, SipC and SipD and negatively influences the secretion of SipA, SopA and SptP. The chain is Invasion protein InvE (invE) from Salmonella typhimurium (strain LT2 / SGSC1412 / ATCC 700720).